The sequence spans 99 residues: Aspartyl/glutamyl-tRNA(Asn/Gln) amidotransferase subunit C (99 aa).

The protein belongs to the GatC family. Heterotrimer of A, B and C subunits.

The catalysed reaction is L-glutamyl-tRNA(Gln) + L-glutamine + ATP + H2O = L-glutaminyl-tRNA(Gln) + L-glutamate + ADP + phosphate + H(+). It catalyses the reaction L-aspartyl-tRNA(Asn) + L-glutamine + ATP + H2O = L-asparaginyl-tRNA(Asn) + L-glutamate + ADP + phosphate + 2 H(+). Its function is as follows. Allows the formation of correctly charged Asn-tRNA(Asn) or Gln-tRNA(Gln) through the transamidation of misacylated Asp-tRNA(Asn) or Glu-tRNA(Gln) in organisms which lack either or both of asparaginyl-tRNA or glutaminyl-tRNA synthetases. The reaction takes place in the presence of glutamine and ATP through an activated phospho-Asp-tRNA(Asn) or phospho-Glu-tRNA(Gln). In Bifidobacterium longum (strain NCC 2705), this protein is Aspartyl/glutamyl-tRNA(Asn/Gln) amidotransferase subunit C.